The following is a 555-amino-acid chain: Wee1-like protein kinase 2 (555 aa).

A disordered region spans residues 1-112 (MADTETDQGL…NFSTPKNSLG (112 aa)). S15 is subject to Phosphoserine; by CaMK2 and PKA. Positions 26 to 41 (EGQMTAQDIGGAQSQK) are enriched in polar residues. The segment covering 57–72 (TRDELHTSLSRDKESP) has biased composition (basic and acidic residues). At S71 the chain carries Phosphoserine. The segment covering 102–112 (TNFSTPKNSLG) has biased composition (polar residues). The Nuclear localization signal signature appears at 167-169 (KRK). The Protein kinase domain occupies 208 to 485 (FFEIEKIGVG…ARSRILWPFL (278 aa)). Residues 214–222 (IGVGEFGTV) and K237 each bind ATP. The Nuclear export signal signature appears at 310-324 (KLKDILLQISLGLKY). D334 serves as the catalytic Proton acceptor. Residues N339 and D375 each coordinate Mg(2+). Residues 488-514 (TDELQKQLNLEKSKTATLKRELKKARH) adopt a coiled-coil conformation.

This sequence belongs to the protein kinase superfamily. Ser/Thr protein kinase family. WEE1 subfamily. Post-translationally, phosphorylated by PKA at Ser-15 in vitro, leading to activate kinase activity. Phosphorylation at Ser-15 by CaMK2, leading to increase its activity and promote metaphase II exit during egg activation. As to expression, ovary-specific.

It is found in the cytoplasm. The protein resides in the nucleus. The catalysed reaction is L-tyrosyl-[protein] + ATP = O-phospho-L-tyrosyl-[protein] + ADP + H(+). Its function is as follows. Oocyte-specific protein tyrosine kinase that phosphorylates and inhibits CDK1 and acts as a key regulator of meiosis during both prophase I and metaphase II. Required to maintain meiotic arrest in oocytes during the germinal vesicle (GV) stage, a long period of quiescence at dictyate prophase I, by phosphorylating CDK1 at 'Tyr-15', leading to inhibit CDK1 activity and prevent meiotic reentry. Also required for metaphase II exit during egg activation by phosphorylating CDK1 at 'Tyr-15', to ensure exit from meiosis in oocytes and promote pronuclear formation. This Mus musculus (Mouse) protein is Wee1-like protein kinase 2 (Wee2).